The following is a 313-amino-acid chain: Cytosolic Fe-S cluster assembly factor NUBP1 homolog (313 aa).

The disordered stretch occupies residues 1-25; sequence MSDVPDDANAGCPGTGSAGAGKASG. Positions 12, 26, 29, and 35 each coordinate [4Fe-4S] cluster. 66–73 is an ATP binding site; that stretch reads GKGGVGKS. The [4Fe-4S] cluster site is built by Cys240 and Cys243.

Belongs to the Mrp/NBP35 ATP-binding proteins family. NUBP1/NBP35 subfamily. Heterotetramer of 2 NUBP1 and 2 NUBP2 chains. Requires [4Fe-4S] cluster as cofactor. In terms of tissue distribution, expressed in head amphid and labial ciliated sensory neurons and tail phasmid ciliated chemosensory neurons.

The protein resides in the cytoplasm. Its subcellular location is the cell projection. Functionally, component of the cytosolic iron-sulfur (Fe/S) protein assembly (CIA) machinery. Required for maturation of extramitochondrial Fe-S proteins. The NUBP1-NUBP2 heterotetramer forms a Fe-S scaffold complex, mediating the de novo assembly of an Fe-S cluster and its transfer to target apoproteins. Regulates cilium formation and structure. This Caenorhabditis elegans protein is Cytosolic Fe-S cluster assembly factor NUBP1 homolog.